A 49-amino-acid polypeptide reads, in one-letter code: Large ribosomal subunit protein eL40 (49 aa).

The protein belongs to the eukaryotic ribosomal protein eL40 family.

This chain is Large ribosomal subunit protein eL40, found in Methanosarcina barkeri (strain Fusaro / DSM 804).